A 29-amino-acid polypeptide reads, in one-letter code: U1-pseudomyrmecitoxin-Pt1 subunit SS2 (29 aa).

Belongs to the myrmexin family. In terms of assembly, heterodimer composed of subunit SS2 and subunit LS1 (U1-PSDTX-Pt1e), and heterodimer composed of subunit SS2 and LS2 (U1-PSDTX-Pt1c); disulfide-linked. In terms of tissue distribution, expressed by the venom gland.

The protein localises to the secreted. Functionally, this heterodimer may have anti-inflammatory properties, since the myrmexin complex (composed of 6 SS-LS heterodimers) inhibits carrageenin-induced edema in a dose-dependent manner (after subcutaneous injection into rats). This is U1-pseudomyrmecitoxin-Pt1 subunit SS2 from Pseudomyrmex triplarinus (Ant).